The sequence spans 201 residues: ATP-dependent Clp protease proteolytic subunit 2 (201 aa).

S98 serves as the catalytic Nucleophile. H123 is an active-site residue.

This sequence belongs to the peptidase S14 family. As to quaternary structure, fourteen ClpP subunits assemble into 2 heptameric rings which stack back to back to give a disk-like structure with a central cavity, resembling the structure of eukaryotic proteasomes.

The protein localises to the cytoplasm. The enzyme catalyses Hydrolysis of proteins to small peptides in the presence of ATP and magnesium. alpha-casein is the usual test substrate. In the absence of ATP, only oligopeptides shorter than five residues are hydrolyzed (such as succinyl-Leu-Tyr-|-NHMec, and Leu-Tyr-Leu-|-Tyr-Trp, in which cleavage of the -Tyr-|-Leu- and -Tyr-|-Trp bonds also occurs).. Its function is as follows. Cleaves peptides in various proteins in a process that requires ATP hydrolysis. Has a chymotrypsin-like activity. Plays a major role in the degradation of misfolded proteins. This chain is ATP-dependent Clp protease proteolytic subunit 2, found in Pseudomonas aeruginosa (strain ATCC 15692 / DSM 22644 / CIP 104116 / JCM 14847 / LMG 12228 / 1C / PRS 101 / PAO1).